The sequence spans 530 residues: AP-4 complex subunit mu (530 aa).

Residues 164-187 form a disordered region; sequence PKQGVKPIHSGSKNSSSGGSSLST. A compositionally biased stretch (low complexity) spans 173–186; the sequence is SGSKNSSSGGSSLS. One can recognise an MHD domain in the interval 227 to 527; it reads DNEIYIDLCE…ITDSKSFVSR (301 aa).

Belongs to the adaptor complexes medium subunit family. As to quaternary structure, may be part of the adaptor protein complex 4 (AP-4), a heterotetramer composed of two large adaptins (epsilon-type subunitand beta-type subunit), a medium adaptin (mu-type subunit) and a small adaptin (sigma-type).

It is found in the golgi apparatus. Its subcellular location is the trans-Golgi network membrane. The protein localises to the early endosome. Its function is as follows. Probable component of an adaptor protein complex. Adaptor protein complexes are vesicle coat components involved both in vesicle formation and cargo selection. They control the vesicular transport of proteins in different trafficking pathways. This Dictyostelium discoideum (Social amoeba) protein is AP-4 complex subunit mu (apm4).